The following is a 285-amino-acid chain: Probable endonuclease 4 (285 aa).

9 residues coordinate Zn(2+): histidine 69, histidine 109, glutamate 145, aspartate 179, histidine 182, histidine 216, aspartate 229, histidine 231, and glutamate 261.

This sequence belongs to the AP endonuclease 2 family. The cofactor is Zn(2+).

The enzyme catalyses Endonucleolytic cleavage to 5'-phosphooligonucleotide end-products.. Its function is as follows. Endonuclease IV plays a role in DNA repair. It cleaves phosphodiester bonds at apurinic or apyrimidinic (AP) sites, generating a 3'-hydroxyl group and a 5'-terminal sugar phosphate. This Salmonella paratyphi A (strain AKU_12601) protein is Probable endonuclease 4.